We begin with the raw amino-acid sequence, 395 residues long: Nitrite extrusion protein (395 aa).

12 consecutive transmembrane segments (helical) span residues 15-35 (SLVA…QITL), 44-64 (ISLV…PLGY), 73-93 (LMFM…SIAD), 96-116 (FDLI…SIGV), 133-153 (GIYG…PVIA), 160-180 (STVQ…VLFG), 203-223 (VLWF…AFTI), 240-262 (AGLR…GFLA), 271-291 (LMFV…SPTI), 293-313 (LYTF…GTVF), 330-350 (IVSA…ASVF), and 357-377 (AIGF…VIWM).

Belongs to the major facilitator superfamily. Nitrate/nitrite porter (TC 2.A.1.8) family.

The protein resides in the cell membrane. In terms of biological role, involved in excretion of nitrite produced by the dissimilatory reduction of nitrate. The chain is Nitrite extrusion protein (narK) from Bacillus subtilis (strain 168).